The sequence spans 393 residues: Enoyl-[acyl-carrier-protein] reductase [NADH] (393 aa).

Residues 48–53, 74–75, 111–112, and 139–140 each bind NAD(+); these read GSSTGY, FE, DA, and LA. Y225 provides a ligand contact to substrate. The active-site Proton donor is Y235. NAD(+) contacts are provided by residues K244 and 273-275; that span reads LVT.

It belongs to the TER reductase family. In terms of assembly, monomer.

The catalysed reaction is a 2,3-saturated acyl-[ACP] + NAD(+) = a (2E)-enoyl-[ACP] + NADH + H(+). Its pathway is lipid metabolism; fatty acid biosynthesis. Its function is as follows. Involved in the final reduction of the elongation cycle of fatty acid synthesis (FAS II). Catalyzes the reduction of a carbon-carbon double bond in an enoyl moiety that is covalently linked to an acyl carrier protein (ACP). The protein is Enoyl-[acyl-carrier-protein] reductase [NADH] of Pseudoalteromonas atlantica (strain T6c / ATCC BAA-1087).